A 242-amino-acid polypeptide reads, in one-letter code: Type III pantothenate kinase (242 aa).

7–14 (DLGNSRFK) contacts ATP. Substrate contacts are provided by residues Tyr-91 and 98–101 (GVDR). Asp-100 (proton acceptor) is an active-site residue. Position 121 (Thr-121) interacts with ATP. A substrate-binding site is contributed by Thr-171.

The protein belongs to the type III pantothenate kinase family. Homodimer. The cofactor is NH4(+). It depends on K(+) as a cofactor.

It localises to the cytoplasm. It carries out the reaction (R)-pantothenate + ATP = (R)-4'-phosphopantothenate + ADP + H(+). It functions in the pathway cofactor biosynthesis; coenzyme A biosynthesis; CoA from (R)-pantothenate: step 1/5. In terms of biological role, catalyzes the phosphorylation of pantothenate (Pan), the first step in CoA biosynthesis. The sequence is that of Type III pantothenate kinase from Xanthomonas euvesicatoria pv. vesicatoria (strain 85-10) (Xanthomonas campestris pv. vesicatoria).